Reading from the N-terminus, the 209-residue chain is Putative thymidylate synthase (209 aa).

The active site involves Cys137.

It belongs to the thymidylate synthase family. Archaeal-type ThyA subfamily. In terms of assembly, monomer.

It localises to the cytoplasm. The protein operates within pyrimidine metabolism; dTTP biosynthesis. Its function is as follows. May catalyze the biosynthesis of dTMP using an unknown cosubstrate. This Methanopyrus kandleri (strain AV19 / DSM 6324 / JCM 9639 / NBRC 100938) protein is Putative thymidylate synthase.